We begin with the raw amino-acid sequence, 343 residues long: Signal peptide peptidase 2 (343 aa).

The Lumenal portion of the chain corresponds to 1-19; that stretch reads MKTHERAANLALAGLSLAP. The helical transmembrane segment at 20–40 threads the bilayer; that stretch reads LVVKVNPNANVILTACLAVYV. The Cytoplasmic segment spans residues 41-62; sequence GCYRSVKPTPPAETMSKEHAMR. Residues 63-83 traverse the membrane as a helical segment; it reads FPLVGSAMLLSLFLLFKFLSK. At 84–89 the chain is on the lumenal side; the sequence is DLVNTV. The helical transmembrane segment at 90-110 threads the bilayer; the sequence is LTAYFFILGIAALCATLLPSI. The Cytoplasmic segment spans residues 111-141; it reads KRFLPKEWNDNAIVWRAPLFHSLSVEFTRSQ. Residues 142–162 traverse the membrane as a helical segment; the sequence is VVASIPGFFFCIWYAAKKHWL. Topologically, residues 163-165 are lumenal; the sequence is ANN. A helical transmembrane segment spans residues 166–186; the sequence is VLGISFCIQGIEMLSLGSFKT. Residues 187–188 are Cytoplasmic-facing; sequence GA. The chain crosses the membrane as a helical span at residues 189 to 209; the sequence is ILLSGLFFYDIFWVFFTPVMV. Residue Asp-198 is part of the active site. Topologically, residues 210-230 are lumenal; the sequence is SVAKSFDAPIKLLFPTGDAAR. The helical transmembrane segment at 231-251 threads the bilayer; sequence PFSMLGLGDIVIPGIFVALAL. Asp-239 is a catalytic residue. The Cytoplasmic portion of the chain corresponds to 252-266; sequence RFDVSRGIKNRYFNS. The chain crosses the membrane as a helical span at residues 267–287; sequence AFLGYTVGLTVTIIVMNWFQA. The Lumenal portion of the chain corresponds to 288–290; the sequence is AQP. A PAL motif is present at residues 290 to 292; that stretch reads PAL. Residues 291 to 311 traverse the membrane as a helical segment; it reads ALLYIVPGVIGFVAVHCLWNG. The Cytoplasmic portion of the chain corresponds to 312-343; sequence EVKPLLEYNESKAEEEEACEEDTDSKQNKKKE. The span at 324 to 334 shows a compositional bias: acidic residues; the sequence is AEEEEACEEDT. The interval 324-343 is disordered; the sequence is AEEEEACEEDTDSKQNKKKE. The Endoplasmic reticulum targeting signal motif lies at 340–343; that stretch reads KKKE.

Belongs to the peptidase A22B family. Ubiquitous.

The protein localises to the endoplasmic reticulum membrane. Functionally, intramembrane-cleaving aspartic protease (I-CLiP) that cleaves type II membrane signal peptides in the hydrophobic plane of the membrane. Catalyzes intramembrane proteolysis of some signal peptides after they have been cleaved from a preprotein, resulting in the release of the fragment from the ER membrane into the cytoplasm. This is Signal peptide peptidase 2 (SPP2) from Oryza sativa subsp. japonica (Rice).